Consider the following 328-residue polypeptide: Bidirectional sugar transporter SWEET16 (328 aa).

Residues 1-5 (MADPS) lie on the Extracellular side of the membrane. A helical membrane pass occupies residues 6 to 26 (FFVGIVGNVISILVFASPIAT). The region spanning 6-92 (FFVGIVGNVI…TLYLAYAPRE (87 aa)) is the MtN3/slv 1 domain. At 27 to 38 (FRRIVRSKSTEE) the chain is on the cytoplasmic side. A helical transmembrane segment spans residues 39–56 (FRWLPYVTTLLSTSLWTF). Topologically, residues 57–63 (YGLHKPG) are extracellular. The chain crosses the membrane as a helical span at residues 64–84 (GLLIVTVNGSGAALEAIYVTL). At 85 to 99 (YLAYAPRETKAKMVK) the chain is on the cytoplasmic side. Residues 100–120 (VVLAVNVGALAAVVAVALVAL) form a helical membrane-spanning segment. The Extracellular segment spans residues 121-125 (HGGVR). The chain crosses the membrane as a helical span at residues 126-146 (LFVVGVLCAALTIGMYAAPMA). Residues 127-213 (FVVGVLCAAL…LYMAYRRTKK (87 aa)) form the MtN3/slv 2 domain. Residues 147-161 (AMRTVVKTRSVEYMP) lie on the Cytoplasmic side of the membrane. Residues 162–182 (FSLSFFLFLNGGVWSVYSLLV) form a helical membrane-spanning segment. Over 183–185 (KDY) the chain is Extracellular. Residues 186–206 (FIGIPNAIGFALGTAQLALYM) form a helical membrane-spanning segment. At 207 to 328 (AYRRTKKPAG…ATTAGPGDRH (122 aa)) the chain is on the cytoplasmic side. Residues 288–299 (HQHHGGHHHHHR) show a composition bias toward basic residues. Positions 288–328 (HQHHGGHHHHHRFDTVPDDDDEAVAAGGTTPATTAGPGDRH) are disordered. The span at 312 to 328 (AAGGTTPATTAGPGDRH) shows a compositional bias: low complexity.

This sequence belongs to the SWEET sugar transporter family. In terms of assembly, forms homooligomers and/or heterooligomers.

It is found in the cell membrane. In terms of biological role, mediates both low-affinity uptake and efflux of sugar across the plasma membrane. This is Bidirectional sugar transporter SWEET16 (SWEET16) from Oryza sativa subsp. japonica (Rice).